Consider the following 221-residue polypeptide: UPF0328 protein ECU11_2110 (221 aa).

The protein belongs to the UPF0328 family.

This Encephalitozoon cuniculi (strain GB-M1) (Microsporidian parasite) protein is UPF0328 protein ECU11_2110.